The primary structure comprises 549 residues: Cytochrome bc1 complex cytochrome b subunit (549 aa).

Residues 45-65 (FLLGEIALYSFVVLLITGVYL) traverse the membrane as a helical segment. The heme site is built by H114 and H128. The next 3 membrane-spanning stretches (helical) occupy residues 118–138 (ALMF…TGAF), 146–166 (WVIG…GYSL), and 189–209 (VIGT…TILI). H216 and H231 together coordinate heme. 5 consecutive transmembrane segments (helical) span residues 217-237 (ILLL…LVWF), 266-286 (SGAF…LLQI), 335-355 (PVWV…YPFL), 381-401 (IGAM…NDII), and 418-438 (IGMV…CIGL).

Belongs to the cytochrome b family. The cytochrome bc1 complex is composed of a cytochrome b (QcrB), the Rieske iron-sulfur protein (QcrA) and a diheme cytochrome c (QcrC) subunit. Heme is required as a cofactor.

Its subcellular location is the cell membrane. The enzyme catalyses a quinol + 2 Fe(III)-[cytochrome c](out) = a quinone + 2 Fe(II)-[cytochrome c](out) + 2 H(+)(out). In terms of biological role, cytochrome b subunit of the cytochrome bc1 complex, an essential component of the respiratory electron transport chain required for ATP synthesis. The bc1 complex catalyzes the oxidation of ubiquinol and the reduction of cytochrome c in the respiratory chain. The bc1 complex operates through a Q-cycle mechanism that couples electron transfer to generation of the proton gradient that drives ATP synthesis. The cytochrome b subunit contains two ubiquinol reactive sites: the oxidation (QP) site and the reduction (QN) site. The sequence is that of Cytochrome bc1 complex cytochrome b subunit (qcrB) from Mycobacterium bovis (strain ATCC BAA-935 / AF2122/97).